An 84-amino-acid polypeptide reads, in one-letter code: Large ribosomal subunit protein bL28 (84 aa).

It belongs to the bacterial ribosomal protein bL28 family.

The polypeptide is Large ribosomal subunit protein bL28 (Deinococcus geothermalis (strain DSM 11300 / CIP 105573 / AG-3a)).